Reading from the N-terminus, the 154-residue chain is Aspartate carbamoyltransferase regulatory chain (154 aa).

Zn(2+)-binding residues include C109, C114, C138, and C141.

The protein belongs to the PyrI family. As to quaternary structure, contains catalytic and regulatory chains. Requires Zn(2+) as cofactor.

In terms of biological role, involved in allosteric regulation of aspartate carbamoyltransferase. The chain is Aspartate carbamoyltransferase regulatory chain from Photobacterium profundum (strain SS9).